The sequence spans 296 residues: Myeloid differentiation primary response protein MyD88 (296 aa).

A Death domain is found at 54-109; that stretch reads MDFEYLEIRQLETQADPTGRLLDAWQGRPGASVGRLLELLTKLGRDDVLLELGPSI. Residues 110-155 are intermediate domain; sequence EEDCQKYILKQQQEEAEKPLQVAAVDSSVPRTAELAGITTLDDPLG. The region spanning 159–293 is the TIR domain; sequence ERFDAFICYC…WFWTRLAKAL (135 aa). Ser-244 carries the phosphoserine modification.

Homodimer. Also forms heterodimers with TIRAP. Binds to TLR2, TLR5, IRAK1, IRAK2 and IRAK4 via their respective TIR domains. Interacts with IL18R1. Interacts with BMX, IL1RL1, IKBKE and IRF7. Interacts with LRRFIP1 and LRRFIP2; this interaction positively regulates Toll-like receptor (TLR) signaling in response to agonist. Interacts with FLII. LRRFIP1 and LRRFIP2 compete with FLII for MYD88-binding. Interacts with IRF1. Upon IL1B treatment, forms a complex with PELI1, IRAK1, IRAK4 and TRAF6; this complex recruits MAP3K7/TAK1, TAB1 and TAB2 to mediate NF-kappa-B activation. Direct binding of SMAD6 to PELI1 prevents the complex formation and hence negatively regulates IL1R-TLR signaling and eventually NF-kappa-B-mediated gene expression. May interact with PIK3AP1. Interacts (via TIR domain) with DHX9 (via H2A and OB-fold regions); this interaction is direct. Interacts with OTUD4 deubiquitinase; the interaction is direct. Interacts with TLR4. As to quaternary structure, (Microbial infection) In case of infection, interacts with uropathogenic E.coli protein TcpC; suppressing Toll-like receptor (TLR)-mediated cytokine production. In terms of assembly, (Microbial infection) In case of infection, interacts with uropathogenic E.faecalis protein TcpF; suppressing Toll-like receptor (TLR)-mediated cytokine production. (Microbial infection) In case of infection, interacts with B.melitensis protein TcpB. As to quaternary structure, (Microbial infection) Interacts with human metapneumovirus protein M2-2; this interaction prevents MYD88-mediated cytokine secretion. Ubiquitinated; undergoes 'Lys-63'-linked polyubiquitination. OTUD4 specifically hydrolyzes 'Lys-63'-linked polyubiquitinated MYD88. Deubiquitinated by USP3 that cleaves 'Lys-63'-linked ubiquitin chains leading to inhibition of MYD88-induced NF-kappa-B signaling. Post-translationally, (Microbial infection) Ubiquitinated by human herpesvirus 8 (KSHV) protein RTA/ORF50, leading to proteasomal degradation ans suppression of TLR4 signaling pathway. Ubiquitous.

It is found in the cytoplasm. The protein resides in the nucleus. In terms of biological role, adapter protein involved in the Toll-like receptor and IL-1 receptor signaling pathway in the innate immune response. Acts via IRAK1, IRAK2, IRF7 and TRAF6, leading to NF-kappa-B activation, cytokine secretion and the inflammatory response. Increases IL-8 transcription. Involved in IL-18-mediated signaling pathway. Activates IRF1 resulting in its rapid migration into the nucleus to mediate an efficient induction of IFN-beta, NOS2/INOS, and IL12A genes. Upon TLR8 activation by GU-rich single-stranded RNA (GU-rich RNA) derived from viruses such as SARS-CoV-2, SARS-CoV and HIV-1, induces IL1B release through NLRP3 inflammasome activation. MyD88-mediated signaling in intestinal epithelial cells is crucial for maintenance of gut homeostasis and controls the expression of the antimicrobial lectin REG3G in the small intestine. This is Myeloid differentiation primary response protein MyD88 from Homo sapiens (Human).